The following is a 172-amino-acid chain: Protein GrpE (172 aa).

Residues 1–23 are disordered; sequence MNQDHPECDSEELTQNSPETDPL.

The protein belongs to the GrpE family. In terms of assembly, homodimer.

The protein localises to the cytoplasm. Participates actively in the response to hyperosmotic and heat shock by preventing the aggregation of stress-denatured proteins, in association with DnaK and GrpE. It is the nucleotide exchange factor for DnaK and may function as a thermosensor. Unfolded proteins bind initially to DnaJ; upon interaction with the DnaJ-bound protein, DnaK hydrolyzes its bound ATP, resulting in the formation of a stable complex. GrpE releases ADP from DnaK; ATP binding to DnaK triggers the release of the substrate protein, thus completing the reaction cycle. Several rounds of ATP-dependent interactions between DnaJ, DnaK and GrpE are required for fully efficient folding. The chain is Protein GrpE from Xylella fastidiosa (strain 9a5c).